Here is a 256-residue protein sequence, read N- to C-terminus: Imidazole glycerol phosphate synthase subunit HisF (256 aa).

Residues aspartate 11 and aspartate 130 contribute to the active site.

Belongs to the HisA/HisF family. In terms of assembly, heterodimer of HisH and HisF.

The protein localises to the cytoplasm. It carries out the reaction 5-[(5-phospho-1-deoxy-D-ribulos-1-ylimino)methylamino]-1-(5-phospho-beta-D-ribosyl)imidazole-4-carboxamide + L-glutamine = D-erythro-1-(imidazol-4-yl)glycerol 3-phosphate + 5-amino-1-(5-phospho-beta-D-ribosyl)imidazole-4-carboxamide + L-glutamate + H(+). The protein operates within amino-acid biosynthesis; L-histidine biosynthesis; L-histidine from 5-phospho-alpha-D-ribose 1-diphosphate: step 5/9. IGPS catalyzes the conversion of PRFAR and glutamine to IGP, AICAR and glutamate. The HisF subunit catalyzes the cyclization activity that produces IGP and AICAR from PRFAR using the ammonia provided by the HisH subunit. This Cupriavidus pinatubonensis (strain JMP 134 / LMG 1197) (Cupriavidus necator (strain JMP 134)) protein is Imidazole glycerol phosphate synthase subunit HisF.